Here is a 224-residue protein sequence, read N- to C-terminus: Haloacetate dehalogenase H-2 (224 aa).

The Nucleophile role is filled by D10.

Belongs to the HAD-like hydrolase superfamily. S-2-haloalkanoic acid dehalogenase family.

The catalysed reaction is a haloacetate + H2O = a halide anion + glycolate + H(+). The sequence is that of Haloacetate dehalogenase H-2 (dehH2) from Moraxella sp. (strain B).